A 460-amino-acid chain; its full sequence is Chromosomal replication initiator protein DnaA (460 aa).

The interval 1-84 (MAVSLWQQCI…RFDIGSRPSA (84 aa)) is domain I, interacts with DnaA modulators. The domain II stretch occupies residues 84-123 (AKKPEPAPVAAVRVPSPQTKASVGTAFNTTEPVANTNHRS). Positions 124-340 (NINPTYQFDN…GALNRVIANA (217 aa)) are domain III, AAA+ region. Residues Gly-168, Gly-170, Lys-171, and Thr-172 each coordinate ATP. The tract at residues 341–460 (NFTGRPITID…YANLIRTLSS (120 aa)) is domain IV, binds dsDNA.

The protein belongs to the DnaA family. In terms of assembly, oligomerizes as a right-handed, spiral filament on DNA at oriC.

The protein resides in the cytoplasm. In terms of biological role, plays an essential role in the initiation and regulation of chromosomal replication. ATP-DnaA binds to the origin of replication (oriC) to initiate formation of the DNA replication initiation complex once per cell cycle. Binds the DnaA box (a 9 base pair repeat at the origin) and separates the double-stranded (ds)DNA. Forms a right-handed helical filament on oriC DNA; dsDNA binds to the exterior of the filament while single-stranded (ss)DNA is stabiized in the filament's interior. The ATP-DnaA-oriC complex binds and stabilizes one strand of the AT-rich DNA unwinding element (DUE), permitting loading of DNA polymerase. After initiation quickly degrades to an ADP-DnaA complex that is not apt for DNA replication. Binds acidic phospholipids. The polypeptide is Chromosomal replication initiator protein DnaA (Shewanella oneidensis (strain ATCC 700550 / JCM 31522 / CIP 106686 / LMG 19005 / NCIMB 14063 / MR-1)).